Reading from the N-terminus, the 327-residue chain is Cytochrome c biogenesis protein CcsA (327 aa).

8 helical membrane-spanning segments follow: residues 13–33 (ISFS…LVNL), 46–66 (GIII…IYSG), 73–93 (LYES…VSYF), 101–121 (LNAI…SGLL), 145–165 (MILG…LLVI), 233–253 (IISL…VWAN), 262–282 (WDPK…YLHI), and 294–314 (AIVA…VNLL).

This sequence belongs to the CcmF/CycK/Ccl1/NrfE/CcsA family. May interact with Ccs1.

The protein localises to the plastid. It localises to the chloroplast thylakoid membrane. In terms of biological role, required during biogenesis of c-type cytochromes (cytochrome c6 and cytochrome f) at the step of heme attachment. The protein is Cytochrome c biogenesis protein CcsA of Lobularia maritima (Sweet alyssum).